Here is a 445-residue protein sequence, read N- to C-terminus: tRNA(Ile2) 2-agmatinylcytidine synthetase TiaS (445 aa).

Residues Val-278–Tyr-349 constitute a DNA-binding region (OB).

It belongs to the TiaS family.

The protein localises to the cytoplasm. It catalyses the reaction cytidine(34) in tRNA(Ile2) + agmatine + ATP + H2O = 2-agmatinylcytidine(34) in tRNA(Ile2) + AMP + 2 phosphate + 2 H(+). Functionally, ATP-dependent agmatine transferase that catalyzes the formation of 2-agmatinylcytidine (agm2C) at the wobble position (C34) of tRNA(Ile2), converting the codon specificity from AUG to AUA. This chain is tRNA(Ile2) 2-agmatinylcytidine synthetase TiaS, found in Thermofilum pendens (strain DSM 2475 / Hrk 5).